A 160-amino-acid polypeptide reads, in one-letter code: Cytochrome b6-f complex subunit 4 (160 aa).

3 consecutive transmembrane segments (helical) span residues Leu36 to Val56, Leu95 to Glu115, and Thr131 to Ile151.

Belongs to the cytochrome b family. PetD subfamily. The 4 large subunits of the cytochrome b6-f complex are cytochrome b6, subunit IV (17 kDa polypeptide, petD), cytochrome f and the Rieske protein, while the 4 small subunits are petG, petL, petM and petN. The complex functions as a dimer.

The protein localises to the plastid. It is found in the chloroplast thylakoid membrane. In terms of biological role, component of the cytochrome b6-f complex, which mediates electron transfer between photosystem II (PSII) and photosystem I (PSI), cyclic electron flow around PSI, and state transitions. This Zygnema circumcarinatum (Green alga) protein is Cytochrome b6-f complex subunit 4.